The sequence spans 60 residues: UPF0434 protein Daci_3569 (60 aa).

Belongs to the UPF0434 family.

The protein is UPF0434 protein Daci_3569 of Delftia acidovorans (strain DSM 14801 / SPH-1).